The chain runs to 156 residues: Large ribosomal subunit protein bL9 (156 aa).

This sequence belongs to the bacterial ribosomal protein bL9 family.

In terms of biological role, binds to the 23S rRNA. This chain is Large ribosomal subunit protein bL9, found in Treponema pallidum (strain Nichols).